Here is a 353-residue protein sequence, read N- to C-terminus: Protein pelota homolog (353 aa).

This sequence belongs to the eukaryotic release factor 1 family. Pelota subfamily. In terms of assembly, monomer. The cofactor is a divalent metal cation.

The protein resides in the cytoplasm. Its function is as follows. May function in recognizing stalled ribosomes, interact with stem-loop structures in stalled mRNA molecules, and effect endonucleolytic cleavage of the mRNA. May play a role in the release non-functional ribosomes and degradation of damaged mRNAs. Has endoribonuclease activity. This Methanothermobacter thermautotrophicus (strain ATCC 29096 / DSM 1053 / JCM 10044 / NBRC 100330 / Delta H) (Methanobacterium thermoautotrophicum) protein is Protein pelota homolog.